Consider the following 463-residue polypeptide: Elongation factor 1-alpha (463 aa).

Position 2 is a n,N,N-trimethylglycine (G2). Position 3 is an N6,N6-dimethyllysine; alternate (K3). At K3 the chain carries N6-methyllysine; alternate. A tr-type G domain is found at 5-239 (KNHVNVVVIG…DAIEPPSRPT (235 aa)). Residues 14–21 (GHVDSGKS) are G1. 14–21 (GHVDSGKS) contributes to the GTP binding site. At K30 the chain carries N6-methyllysine. The G2 stretch occupies residues 70–74 (GITID). The residue at position 79 (K79) is an N6,N6,N6-trimethyllysine. The segment at 91 to 94 (DAPG) is G3. Residues 91 to 95 (DAPGH) and 153 to 156 (NKMD) contribute to the GTP site. Positions 153–156 (NKMD) are G4. A G5 region spans residues 191–193 (SGW). At K315 the chain carries N6,N6-dimethyllysine; alternate. K315 bears the N6-methyllysine; alternate mark. An N6-methyllysine modification is found at K389.

This sequence belongs to the TRAFAC class translation factor GTPase superfamily. Classic translation factor GTPase family. EF-Tu/EF-1A subfamily.

The protein resides in the cytoplasm. Functionally, this protein promotes the GTP-dependent binding of aminoacyl-tRNA to the A-site of ribosomes during protein biosynthesis. The sequence is that of Elongation factor 1-alpha (TEF) from Puccinia graminis (Black stem rust fungus).